The chain runs to 452 residues: MELSRRICLVRLWLLLLSFLLGFSAGSALNWREQEGKEVWDYVTVREDARMFWWLYYATNPCKNFSELPLVMWLQGGPGGSSTGFGNFEEIGPLDTRLKPRNTTWLQWASLLFVDNPVGTGFSYVNTTDAYAKDLDTVASDMMVLLKSFFDCHKEFQTVPFYIFSESYGGKMAAGISLELHKAIQQGTIKCNFSGVALGDSWISPVDSVLSWGPYLYSVSLLDNKGLAEVSDIAEQVLNAVNKGFYKEATQLWGKAEMIIEKNTDGVNFYNILTKSTPDTSMESSLEFFRSPLVRLCQRHVRHLQGDALSQLMNGPIKKKLKIIPDDVSWGAQSSSVFISMEEDFMKPVIDIVDTLLELGVNVTVYNGQLDLIVDTIGQESWVQKLKWPQLSRFNQLKWKALYTNPKSSETSAFVKSYENLAFYWILKAGHMVPADQGDMALKMMRLVTQQE.

An N-terminal signal peptide occupies residues 1-28 (MELSRRICLVRLWLLLLSFLLGFSAGSA). N64, N102, and N126 each carry an N-linked (GlcNAc...) asparagine glycan. The active site involves S167. N192 and N362 each carry an N-linked (GlcNAc...) asparagine glycan. Active-site residues include D371 and H431.

It belongs to the peptidase S10 family. As to expression, highly expressed in aorta, bladder, and kidney with much lower levels in all other tissues analyzed. Expression in kidney is restricted to proximal convoluted tubules.

It localises to the secreted. In terms of biological role, may be involved in vascular wall and kidney homeostasis. The polypeptide is Retinoid-inducible serine carboxypeptidase (Scpep1) (Rattus norvegicus (Rat)).